A 207-amino-acid chain; its full sequence is Gap junction epsilon-1 protein (207 aa).

The Cytoplasmic portion of the chain corresponds to 1 to 22 (MSLNYIKNFYEGCLRPPTVIGQ). A helical transmembrane segment spans residues 23-43 (FHTLFFGSVRTFFLGVLGFAV). Residues 44–74 (YGNEALHFSCDPDKRELNLYCYNQFRPITPQ) are Extracellular-facing. Intrachain disulfides connect cysteine 53–cysteine 161 and cysteine 64–cysteine 147. The helical transmembrane segment at 75–95 (VFWALQLVTVLVPGAVFHLYA) threads the bilayer. Residues 96–111 (ACKNIDQEEILHRPMS) are Cytoplasmic-facing. Residues 112 to 132 (TVFYIISVLLRIILEVLAFWL) traverse the membrane as a helical segment. The Extracellular segment spans residues 133-175 (QSHLFGFLVDPIFMCDVTGLGKILNVSKCMVPEHFEKTIFLSA). Residues 176–196 (MYTFTIITILLCIAEIFEILF) traverse the membrane as a helical segment. Topologically, residues 197–207 (RRLGYLNQPMT) are cytoplasmic.

This sequence belongs to the connexin family. Beta-type (group I) subfamily. In terms of assembly, a connexon is composed of a hexamer of connexins.

The protein resides in the cell membrane. In terms of biological role, has significant hemichannel activity. However, has only low-efficiency gap junction activity and probably does not function as a gap junction channel in vivo. The sequence is that of Gap junction epsilon-1 protein from Danio rerio (Zebrafish).